The sequence spans 201 residues: Adenylyl-sulfate kinase (201 aa).

Residue 35–42 (GLSGSGKS) participates in ATP binding. The active-site Phosphoserine intermediate is Ser-109.

This sequence belongs to the APS kinase family.

It carries out the reaction adenosine 5'-phosphosulfate + ATP = 3'-phosphoadenylyl sulfate + ADP + H(+). It participates in sulfur metabolism; hydrogen sulfide biosynthesis; sulfite from sulfate: step 2/3. In terms of biological role, catalyzes the synthesis of activated sulfate. The sequence is that of Adenylyl-sulfate kinase from Shigella flexneri.